The sequence spans 525 residues: Bestrophin homolog 15 (525 aa).

Helical transmembrane passes span 36–56 (LFMFIIAFITVSSVYRSNLII), 71–91 (FDQNMDFIPLTFMLGFFVTII), 237–257 (LAYPQVVFLAVRSYFFMALIA), and 273–293 (ILYPTVPFVMSILQFIFVVGW).

It belongs to the anion channel-forming bestrophin (TC 1.A.46) family. Calcium-sensitive chloride channel subfamily. In terms of assembly, forms oligomers.

The protein localises to the cell membrane. Forms chloride channels. This Caenorhabditis elegans protein is Bestrophin homolog 15 (best-15).